Here is a 486-residue protein sequence, read N- to C-terminus: Photosystem II CP43 reaction center protein (486 aa).

Residues 1 to 28 constitute a propeptide that is removed on maturation; it reads MKVFVHGWQHKISHTRILYSLRRFYHVE. Helical transmembrane passes span 82–106, 147–168, 191–213, 268–288, and 304–325; these read LFEVAHFIPEKPLYEQGFILIPHLA, LIGPDTLEESFPFFGYDWRDKN, KALFFGGVYDTWAPGGGDVRLIN, KPFAWARRAFVWSGEAYLSYS, and WYNNTAYPSEFYGPTGPEASQA. Glu-380 contacts [CaMn4O5] cluster. Residues 460-484 traverse the membrane as a helical segment; sequence RARAAAAGFEKGINRENEAVLSMRP.

It belongs to the PsbB/PsbC family. PsbC subfamily. In terms of assembly, PSII is composed of 1 copy each of membrane proteins PsbA, PsbB, PsbC, PsbD, PsbE, PsbF, PsbH, PsbI, PsbJ, PsbK, PsbL, PsbM, PsbT, PsbX, PsbY, PsbZ, Psb30/Ycf12, at least 3 peripheral proteins of the oxygen-evolving complex and a large number of cofactors. It forms dimeric complexes. Binds multiple chlorophylls and provides some of the ligands for the Ca-4Mn-5O cluster of the oxygen-evolving complex. It may also provide a ligand for a Cl- that is required for oxygen evolution. PSII binds additional chlorophylls, carotenoids and specific lipids. serves as cofactor.

The protein localises to the plastid. Its subcellular location is the chloroplast thylakoid membrane. Functionally, one of the components of the core complex of photosystem II (PSII). It binds chlorophyll and helps catalyze the primary light-induced photochemical processes of PSII. PSII is a light-driven water:plastoquinone oxidoreductase, using light energy to abstract electrons from H(2)O, generating O(2) and a proton gradient subsequently used for ATP formation. The chain is Photosystem II CP43 reaction center protein from Gracilaria tenuistipitata var. liui (Red alga).